The following is a 442-amino-acid chain: UDP-N-acetylmuramoylalanine--D-glutamate ligase (442 aa).

Residue 115–121 (GSNGKST) coordinates ATP.

It belongs to the MurCDEF family.

The protein resides in the cytoplasm. The enzyme catalyses UDP-N-acetyl-alpha-D-muramoyl-L-alanine + D-glutamate + ATP = UDP-N-acetyl-alpha-D-muramoyl-L-alanyl-D-glutamate + ADP + phosphate + H(+). Its pathway is cell wall biogenesis; peptidoglycan biosynthesis. Its function is as follows. Cell wall formation. Catalyzes the addition of glutamate to the nucleotide precursor UDP-N-acetylmuramoyl-L-alanine (UMA). The sequence is that of UDP-N-acetylmuramoylalanine--D-glutamate ligase from Vibrio vulnificus (strain YJ016).